Here is a 299-residue protein sequence, read N- to C-terminus: Taste receptor type 2 member 4 (299 aa).

Over 1 to 9 the chain is Extracellular; the sequence is MLRLFYFSA. The chain crosses the membrane as a helical span at residues 10–30; sequence VIASVILNFVGIIMNLFITVV. Residues 31 to 46 lie on the Cytoplasmic side of the membrane; the sequence is NCKTWVKSHRISSSDR. The helical transmembrane segment at 47-67 threads the bilayer; sequence ILFSLGITRFLMLGLFLVNTI. Residues 68–81 are Extracellular-facing; it reads YFVSSNMERSVYLS. The chain crosses the membrane as a helical span at residues 82 to 102; sequence AFFVLCFMFLDSSSLWFVTLL. At 103–131 the chain is on the cytoplasmic side; it reads NILYCVKITNFQHSVFLLLKRSISPKIPR. Residues 132-152 traverse the membrane as a helical segment; that stretch reads LLLAFVLISAFTTCLYITLSQ. Topologically, residues 153-172 are extracellular; sequence ASPFPELVTTRNNTSFNISE. N-linked (GlcNAc...) asparagine glycans are attached at residues N164, N165, and N169. The helical transmembrane segment at 173–193 threads the bilayer; it reads GILSLVVSLVLSSSLQFIINV. At 194–230 the chain is on the cytoplasmic side; sequence TSASLLIHSLRRHIQKMQKNATGFWNPQMEAHVGAMK. Residues 231-251 traverse the membrane as a helical segment; that stretch reads LMVYFLILYIPYSVATLVQYL. Residues 252-262 lie on the Extracellular side of the membrane; that stretch reads PFYAGMDMGTK. The helical transmembrane segment at 263–283 threads the bilayer; sequence SICLIFATLYSPGHSVLIIIT. Over 284–299 the chain is Cytoplasmic; the sequence is HPKLKTTAKKILCFKK.

This sequence belongs to the G-protein coupled receptor T2R family.

It localises to the membrane. The protein resides in the cell projection. The protein localises to the cilium membrane. Its function is as follows. Gustducin-coupled receptor implicated in the perception of bitter compounds in the oral cavity and the gastrointestinal tract. Signals through PLCB2 and the calcium-regulated cation channel TRPM5. In airway epithelial cells, binding of denatonium increases the intracellular calcium ion concentration and stimulates ciliary beat frequency. In Gorilla gorilla gorilla (Western lowland gorilla), this protein is Taste receptor type 2 member 4 (TAS2R4).